Here is a 425-residue protein sequence, read N- to C-terminus: Gamma-glutamyl phosphate reductase (425 aa).

Belongs to the gamma-glutamyl phosphate reductase family.

It localises to the cytoplasm. It carries out the reaction L-glutamate 5-semialdehyde + phosphate + NADP(+) = L-glutamyl 5-phosphate + NADPH + H(+). It participates in amino-acid biosynthesis; L-proline biosynthesis; L-glutamate 5-semialdehyde from L-glutamate: step 2/2. Its function is as follows. Catalyzes the NADPH-dependent reduction of L-glutamate 5-phosphate into L-glutamate 5-semialdehyde and phosphate. The product spontaneously undergoes cyclization to form 1-pyrroline-5-carboxylate. The protein is Gamma-glutamyl phosphate reductase of Aromatoleum aromaticum (strain DSM 19018 / LMG 30748 / EbN1) (Azoarcus sp. (strain EbN1)).